Reading from the N-terminus, the 234-residue chain is AA9 family lytic polysaccharide monooxygenase D (234 aa).

Positions 1 to 18 (MRIEKLLNAALLAGAVSA) are cleaved as a signal peptide. Cu(2+) is bound by residues His-19 and His-95. A disulfide bond links Cys-57 and Cys-182. The O2 site is built by His-168 and Gln-177. Residue Tyr-179 coordinates Cu(2+).

This sequence belongs to the polysaccharide monooxygenase AA9 family. The cofactor is Cu(2+).

The protein resides in the secreted. The enzyme catalyses [(1-&gt;4)-beta-D-glucosyl]n+m + reduced acceptor + O2 = 4-dehydro-beta-D-glucosyl-[(1-&gt;4)-beta-D-glucosyl]n-1 + [(1-&gt;4)-beta-D-glucosyl]m + acceptor + H2O.. In terms of biological role, lytic polysaccharide monooxygenase (LPMO) that depolymerizes crystalline and amorphous polysaccharides via the oxidation of scissile alpha- or beta-(1-4)-glycosidic bonds, yielding C1 or C4 oxidation products. Catalysis by LPMOs requires the reduction of the active-site copper from Cu(II) to Cu(I) by a reducing agent and H(2)O(2) or O(2) as a cosubstrate. The chain is AA9 family lytic polysaccharide monooxygenase D from Malbranchea cinnamomea (Thermophilic fungus).